We begin with the raw amino-acid sequence, 407 residues long: Methylthioribose kinase (407 aa).

ATP-binding positions include Asn-40, Lys-57, and 111–113; that span reads EDL. Residue Asp-229 coordinates substrate. 246 to 248 lines the ATP pocket; that stretch reads DAE. Residue Arg-344 participates in substrate binding.

Belongs to the methylthioribose kinase family. As to quaternary structure, homodimer.

It carries out the reaction 5-(methylsulfanyl)-D-ribose + ATP = 5-(methylsulfanyl)-alpha-D-ribose 1-phosphate + ADP + H(+). The protein operates within amino-acid biosynthesis; L-methionine biosynthesis via salvage pathway; S-methyl-5-thio-alpha-D-ribose 1-phosphate from S-methyl-5'-thioadenosine (hydrolase route): step 2/2. Catalyzes the phosphorylation of methylthioribose into methylthioribose-1-phosphate. In Yersinia pestis bv. Antiqua (strain Angola), this protein is Methylthioribose kinase.